The primary structure comprises 538 residues: Cytochrome P450 monooxygenase claO (538 aa).

Helical transmembrane passes span 7-27 (IGAF…KLVG) and 222-242 (INPS…PILL). Cys-475 is a binding site for heme.

This sequence belongs to the cytochrome P450 family. Heme is required as a cofactor.

It localises to the membrane. Its pathway is secondary metabolite biosynthesis; terpenoid biosynthesis. Functionally, cytochrome P450 monooxygenase; part of the gene cluster that mediates the biosynthesis of clavilactone A, a meroterpenoid that features a unique benzo-fused ten-membered carbocyclic ring unit with an alpha,beta-epoxy-gamma-lactone moiety, forming an intriguing 10/5/3 tricyclic nested skeleton. Cytochrome P450 monooxygenases claO, claP, claQ, claU, and claW are close orthologs, suggesting that a redundant function or pseudogenes are present in the cla cluster. These monoxygenases are not involved in clavilactone A biosynthesis nor in its modification. ClaR, ClaS and ClaT are sufficient to produce clavilactone A. The biosynthesis begins with the prenyltransferase claS that transfers geranyl pyrophosphate (GPP) to hydroquinone to produces geranylhydroquinone. The cytochrome P450 monooxygenase claR then catalyzes the diradical coupling reaction between the intramolecular hydroquinone and allyl moieties to form the benzo-fused ten-membered carbocyclic ring unit of wigantol. Finally the cytochrome P450 monooxygenase claT exquisitely and stereoselectively assembles the alpha,beta-epoxy-gamma-lactone moiety, producing clavilactone A via arnebinol A. This is Cytochrome P450 monooxygenase claO from Ampulloclitocybe clavipes (Club foot).